The chain runs to 208 residues: Small ribosomal subunit protein uS4 (208 aa).

A disordered region spans residues 31–50 (SALDKRAYGPGQHGQRRTKT). An S4 RNA-binding domain is found at 98–161 (RRLDNVVYRM…KSNPQVVRAM (64 aa)).

Belongs to the universal ribosomal protein uS4 family. Part of the 30S ribosomal subunit. Contacts protein S5. The interaction surface between S4 and S5 is involved in control of translational fidelity.

Its function is as follows. One of the primary rRNA binding proteins, it binds directly to 16S rRNA where it nucleates assembly of the body of the 30S subunit. In terms of biological role, with S5 and S12 plays an important role in translational accuracy. This is Small ribosomal subunit protein uS4 from Helicobacter pylori (strain J99 / ATCC 700824) (Campylobacter pylori J99).